A 167-amino-acid polypeptide reads, in one-letter code: uncharacterized protein (167 aa).

An N-acetyltransferase domain is found at 9-167 (PVMRRLTLQD…DCEVRMLREL (159 aa)).

This sequence belongs to the acetyltransferase family.

This is an uncharacterized protein from Escherichia coli (strain K12).